A 185-amino-acid chain; its full sequence is Ribosome-recycling factor (185 aa).

It belongs to the RRF family.

It localises to the cytoplasm. Functionally, responsible for the release of ribosomes from messenger RNA at the termination of protein biosynthesis. May increase the efficiency of translation by recycling ribosomes from one round of translation to another. This is Ribosome-recycling factor from Xanthomonas euvesicatoria pv. vesicatoria (strain 85-10) (Xanthomonas campestris pv. vesicatoria).